Consider the following 146-residue polypeptide: Large ribosomal subunit protein uL15y (146 aa).

Composition is skewed to basic residues over residues 1–14 (MATA…KRGH) and 21–30 (RIGKHRKHPG). Positions 1 to 38 (MATALKKNRKKRGHVSAGHGRIGKHRKHPGGRGNAGGM) are disordered.

The protein belongs to the universal ribosomal protein uL15 family.

This is Large ribosomal subunit protein uL15y (RPL27AB) from Arabidopsis thaliana (Mouse-ear cress).